We begin with the raw amino-acid sequence, 471 residues long: Probable ribonuclease FAU-1 (471 aa).

This sequence belongs to the FAU-1 family.

Its function is as follows. Probable RNase involved in rRNA stability through maturation and/or degradation of precursor rRNAs. Preferentially cleaves UA sequences in the 5' precursor region of 5S rRNA. Binds to RNA in loop regions with AU-rich sequences. This chain is Probable ribonuclease FAU-1, found in Thermococcus kodakarensis (strain ATCC BAA-918 / JCM 12380 / KOD1) (Pyrococcus kodakaraensis (strain KOD1)).